Consider the following 1906-residue polypeptide: Zinc metalloprotease ZmpB (1906 aa).

The N-terminal stretch at 1 to 33 is a signal peptide; the sequence is MFKKDRFSIRKIKGVVGSVFLGSLLMAPSVVDA. Positions 34 to 76 are excised as a propeptide; the sequence is ATYHYVNKEIISQEAKDLIQTGKPDRNEVVYGLVYQKDQLPQT. An LPXTG sorting signal motif is present at residues 73–77; sequence LPQTG. Thr-76 bears the Pentaglycyl murein peptidoglycan amidated threonine mark. The next 2 helical transmembrane spans lie at 77-98 and 105-127; these read GTEASVLTAFGLLTVGSLLLIY and SVFLVGAMGLVVLPSAGAVDPVA. Topologically, residues 128–1906 are extracellular; it reads TLALASREGV…TNSFKTSIFK (1779 aa). Positions 178 to 436 are disordered; the sequence is VETPQSITNQ…KASSVSPTDY (259 aa). Residues 181–196 show a composition bias toward polar residues; that stretch reads PQSITNQEQARTENQV. Composition is skewed to basic and acidic residues over residues 201-239, 252-262, 271-335, 352-375, and 383-408; these read EAPKEEAPKTEESPKEEPKSEVKPTDDTLPKVEEGKEDS, VESKPEEKVAV, KPAE…KEET, KQTEPTEEPKVEQAGEPVAPREDE, and EPEKQPEVPEEEKAVEETPKPEDKIK. Tandem repeats lie at residues 277 to 291, 293 to 315, 361 to 375, and 380 to 402. Residues 277–375 form a 2 X 15 AA repeats of K-V-E-Q-A-G-E-P-V-A-P-R-E-D-E region; the sequence is KVEQAGEPVA…GEPVAPREDE (99 aa). A 2 X 23 AA approximate repeats region spans residues 293–375; sequence APVEPEKQPE…GEPVAPREDE (83 aa). A compositionally biased stretch (polar residues) spans 421-436; the sequence is LNNQIDKASSVSPTDY. His-1562 is a binding site for Zn(2+). Glu-1563 is an active-site residue. Positions 1566 and 1586 each coordinate Zn(2+).

Belongs to the peptidase M26 family. The cofactor is Zn(2+). The Gram-positive cell-wall anchor motif LPXTG is located in the N-terminal part, in contrast to such motifs in other known streptococcal and staphylococcal proteins. The protease could be cleaved by the sortase and anchored in the membrane via the two potential N-terminal transmembrane domains, whereas the propeptide located prior to the LPXTG motif would remain attached to the cell wall peptidoglycan by an amide bond.

It localises to the secreted. Its subcellular location is the cell wall. The protein localises to the membrane. Is a virulence factor capable of inducing inflammation in the lower respiratory tract, by increasing tumor necrosis factor alpha (TNF-alpha) concentration in the lungs. Also appears to have other functions important in virulence in models of pneumonia and septicemia. This chain is Zinc metalloprotease ZmpB (zmpB), found in Streptococcus pneumoniae serotype 4 (strain ATCC BAA-334 / TIGR4).